Reading from the N-terminus, the 151-residue chain is Myosin catalytic light chain, smooth muscle (151 aa).

Residue A1 is modified to N-acetylalanine. 3 consecutive EF-hand domains span residues 6-41 (DRIT…LGQN), 83-118 (GSYE…LGEK), and 119-151 (MSEE…LLEG).

Functionally, in molluscan muscle, calcium regulation is associated with myosin rather than with actin. Muscle myosin contains two types of light chains: the catalytic light chain, essential for ATPase activity, and the regulatory light chain, a calcium-binding protein responsible for Ca(2+) dependent binding and Ca(2+) dependent Mg-ATPase activity. This Halocynthia roretzi (Sea squirt) protein is Myosin catalytic light chain, smooth muscle.